Consider the following 710-residue polypeptide: MSAKRKSFDEALAQKDVDHLTLEEAPEELERLAAEIEKHDKLYYQKDAPRISDAEYDTLRRRNEAIEARYPELVREDSPSHRVGAQPADGFGKVVHKVPMLSLSNAFDDEDVRDFALRIRRFLNLKEEDILPITAEPKIDGLSAALRYEKGKFVMGATRGDGREGENVTENLKTIGDIPAELKGKNIPDVVEVRGEVYMSHEDFAALNERQREAGKPVFANPRNAAAGSLRQLDAKITASRPLRFFAYTWGEMSDLPADTQSGVMDAFRKWGFTVNPLFGRCDTVEALIDFYHDIEERRATLGYDIDGVVYKVDRLDWQNRLGFVSRSPRWALAHKFPAEQAMTVLEKIEIQVGRTGALTPVARLTPVTVGGVVVSNATLHNADEIERLGVRPGDTVVVQRAGDVIPQIVRVVEDRPRGKKKFVFPDTCPECGSHAVREVNPKTGKLDAVARCTGGLVCPAQAVERLRHFVSRNAFDIEGLGEKQIAAFFEDGLIKKPDDIFTLAARDAKSLKKLKDREGWGATSARKLFDAIDARREVELDRFIFGLGIRHVGETNARLLARSYGTLDHFEEQMRAAADREDEAYAELLSIDGVGEVLAESIVDFFAEKHNREVLDGLREAGVKGVPLPKQETSSPVAGKTVVFTGSLEKMTRSEAKARAEQLGAKVAGSVSAKTDILVAGADAGSKLAKARELGIEILDEDQWIELAG.

Residues 53–57 (DAEYD), 102–103 (SL), and Glu-136 each bind NAD(+). The active-site N6-AMP-lysine intermediate is the Lys-138. NAD(+)-binding residues include Arg-159, Glu-196, Lys-312, and Lys-336. The Zn(2+) site is built by Cys-429, Cys-432, Cys-453, and Cys-459. In terms of domain architecture, BRCT spans 633-710 (ETSSPVAGKT…DEDQWIELAG (78 aa)).

This sequence belongs to the NAD-dependent DNA ligase family. LigA subfamily. The cofactor is Mg(2+). Mn(2+) is required as a cofactor.

It catalyses the reaction NAD(+) + (deoxyribonucleotide)n-3'-hydroxyl + 5'-phospho-(deoxyribonucleotide)m = (deoxyribonucleotide)n+m + AMP + beta-nicotinamide D-nucleotide.. Its function is as follows. DNA ligase that catalyzes the formation of phosphodiester linkages between 5'-phosphoryl and 3'-hydroxyl groups in double-stranded DNA using NAD as a coenzyme and as the energy source for the reaction. It is essential for DNA replication and repair of damaged DNA. The sequence is that of DNA ligase from Parvibaculum lavamentivorans (strain DS-1 / DSM 13023 / NCIMB 13966).